We begin with the raw amino-acid sequence, 757 residues long: Large ribosomal subunit protein mL102 (rPPR5) (757 aa).

The span at glutamate 39–aspartate 55 shows a compositional bias: polar residues. The segment at glutamate 39–glutamine 82 is disordered. The span at arginine 70–glutamine 82 shows a compositional bias: basic and acidic residues. 16 PPR repeats span residues aspartate 149–tryptophan 183, aspartate 184–arginine 218, threonine 219–proline 253, threonine 254–proline 288, aspartate 289–proline 323, serine 324–proline 358, asparagine 359–proline 393, aspartate 395–alanine 429, glutamate 430–leucine 464, glutamate 473–aspartate 507, alanine 510–arginine 541, glutamate 542–proline 576, aspartate 577–isoleucine 611, asparagine 614–alanine 648, aspartate 651–leucine 680, and glutamate 681–threonine 715.

Belongs to the PPR family. P subfamily. Component of the mitochondrial ribosome large subunit.

It is found in the mitochondrion. This is Large ribosomal subunit protein mL102 (rPPR5) from Arabidopsis thaliana (Mouse-ear cress).